The sequence spans 381 residues: Creatine kinase M-type (381 aa).

Positions 11-98 (KLNYKSEEEY…FDPIIQDRHG (88 aa)) constitute a Phosphagen kinase N-terminal domain. One can recognise a Phosphagen kinase C-terminal domain in the interval 125–367 (YVLSSRVRTG…KLMVEMEKKL (243 aa)). 128–132 (SSRVR) is a binding site for ATP. Serine 164 carries the phosphoserine modification. At threonine 166 the chain carries Phosphothreonine. Serine 178 is subject to Phosphoserine. A Phosphothreonine modification is found at threonine 180. An ATP-binding site is contributed by histidine 191. Serine 199 bears the Phosphoserine mark. Residues arginine 236 and arginine 292 each contribute to the ATP site. Phosphothreonine is present on residues threonine 313 and threonine 322. 320–325 (RGTGGV) provides a ligand contact to ATP. Serine 372 is modified (phosphoserine).

Belongs to the ATP:guanido phosphotransferase family. In terms of assembly, dimer of identical or non-identical chains, which can be either B (brain type) or M (muscle type). With MM being the major form in skeletal muscle and myocardium, MB existing in myocardium, and BB existing in many tissues, especially brain.

The catalysed reaction is creatine + ATP = N-phosphocreatine + ADP + H(+). Reversibly catalyzes the transfer of phosphate between ATP and various phosphogens (e.g. creatine phosphate). Creatine kinase isoenzymes play a central role in energy transduction in tissues with large, fluctuating energy demands, such as skeletal muscle, heart, brain and spermatozoa. This chain is Creatine kinase M-type (CKM), found in Oryctolagus cuniculus (Rabbit).